We begin with the raw amino-acid sequence, 106 residues long: Urease subunit beta (106 aa).

The protein belongs to the urease beta subunit family. As to quaternary structure, heterotrimer of UreA (gamma), UreB (beta) and UreC (alpha) subunits. Three heterotrimers associate to form the active enzyme.

Its subcellular location is the cytoplasm. It catalyses the reaction urea + 2 H2O + H(+) = hydrogencarbonate + 2 NH4(+). It participates in nitrogen metabolism; urea degradation; CO(2) and NH(3) from urea (urease route): step 1/1. In Escherichia coli O157:H7, this protein is Urease subunit beta.